The following is a 124-amino-acid chain: Small ribosomal subunit protein uS13 (124 aa).

The disordered stretch occupies residues 99–124 (PCRGQKTKTNARTCKGPKKTVANKKK). The span at 113–124 (KGPKKTVANKKK) shows a compositional bias: basic residues.

This sequence belongs to the universal ribosomal protein uS13 family. Part of the 30S ribosomal subunit. Forms a loose heterodimer with protein S19. Forms two bridges to the 50S subunit in the 70S ribosome.

Located at the top of the head of the 30S subunit, it contacts several helices of the 16S rRNA. In the 70S ribosome it contacts the 23S rRNA (bridge B1a) and protein L5 of the 50S subunit (bridge B1b), connecting the 2 subunits; these bridges are implicated in subunit movement. Contacts the tRNAs in the A and P-sites. This is Small ribosomal subunit protein uS13 from Lachnospira eligens (strain ATCC 27750 / DSM 3376 / VPI C15-48 / C15-B4) (Eubacterium eligens).